Here is a 211-residue protein sequence, read N- to C-terminus: Late expression factor 7 (211 aa).

Involved in late/very late gene activation. This is Late expression factor 7 (LEF-7) from Orgyia pseudotsugata multicapsid polyhedrosis virus (OpMNPV).